We begin with the raw amino-acid sequence, 150 residues long: Cytochrome c oxidase subunit 5A, mitochondrial (150 aa).

Residues 1–41 (MLGAALRRCAVAATAWAGPRGLLHSAPTPGPAAAIHSVRCY) constitute a mitochondrion transit peptide. An SIFI-degron motif is present at residues 2–17 (LGAALRRCAVAATAWA). Residues Lys87 and Lys113 each carry the N6-acetyllysine modification. Thr141 bears the Phosphothreonine mark.

It belongs to the cytochrome c oxidase subunit 5A family. In terms of assembly, component of the cytochrome c oxidase (complex IV, CIV), a multisubunit enzyme composed of 14 subunits. The complex is composed of a catalytic core of 3 subunits MT-CO1, MT-CO2 and MT-CO3, encoded in the mitochondrial DNA, and 11 supernumerary subunits COX4I, COX5A, COX5B, COX6A, COX6B, COX6C, COX7A, COX7B, COX7C, COX8 and NDUFA4, which are encoded in the nuclear genome. The complex exists as a monomer or a dimer and forms supercomplexes (SCs) in the inner mitochondrial membrane with NADH-ubiquinone oxidoreductase (complex I, CI) and ubiquinol-cytochrome c oxidoreductase (cytochrome b-c1 complex, complex III, CIII), resulting in different assemblies (supercomplex SCI(1)III(2)IV(1) and megacomplex MCI(2)III(2)IV(2)). Interacts with AFG1L. Interacts with RAB5IF. Post-translationally, in response to mitochondrial stress, the precursor protein is ubiquitinated by the SIFI complex in the cytoplasm before mitochondrial import, leading to its degradation. Within the SIFI complex, UBR4 initiates ubiquitin chain that are further elongated or branched by KCMF1.

It localises to the mitochondrion inner membrane. It functions in the pathway energy metabolism; oxidative phosphorylation. In terms of biological role, component of the cytochrome c oxidase, the last enzyme in the mitochondrial electron transport chain which drives oxidative phosphorylation. The respiratory chain contains 3 multisubunit complexes succinate dehydrogenase (complex II, CII), ubiquinol-cytochrome c oxidoreductase (cytochrome b-c1 complex, complex III, CIII) and cytochrome c oxidase (complex IV, CIV), that cooperate to transfer electrons derived from NADH and succinate to molecular oxygen, creating an electrochemical gradient over the inner membrane that drives transmembrane transport and the ATP synthase. Cytochrome c oxidase is the component of the respiratory chain that catalyzes the reduction of oxygen to water. Electrons originating from reduced cytochrome c in the intermembrane space (IMS) are transferred via the dinuclear copper A center (CU(A)) of subunit 2 and heme A of subunit 1 to the active site in subunit 1, a binuclear center (BNC) formed by heme A3 and copper B (CU(B)). The BNC reduces molecular oxygen to 2 water molecules using 4 electrons from cytochrome c in the IMS and 4 protons from the mitochondrial matrix. This is Cytochrome c oxidase subunit 5A, mitochondrial (COX5A) from Saimiri sciureus (Common squirrel monkey).